The chain runs to 476 residues: MRGYEVIIGFETHAQLSTASKIFSRASTAFGAEPNTQACAVDLALPGTLPVMNKGAVERAIKLGLALGSHIAPRSVFARKNYFYPDLPKGYQISQYEIPVVQGGAVSFFLGEEKKTVRLVRAHLEEDAGKSLHENFIGQSGIDLNRAGTPLLEIVTEPDMRSTAEAVAYARELHKIVTWIGICDGNMQEGSFRCDANVSVRKPGEKLGTRREIKNLNSFKFMQQAIDYEINSQINELEDGRKIEQATVLFDPDTGETRTMRTKEDAADYRYFPDPDLPPLAIEAEWIERVRATMPELPRAMAERYVRDHGMSEYDAAQLTQSPALARYFDDAVKAGATPKLASNWITGEMARRLNAQEIGIEAAPVTAQQLAQLVGRIADGTLPNNAARQVFDALWTGEGSDVDAIIEARDLKPMSDTGALDRILDEVIAKNAKNVEEYRGGKEKALNGLVGQVMKASGGKANPAQVTELLKAKLG.

Belongs to the GatB/GatE family. GatB subfamily. As to quaternary structure, heterotrimer of A, B and C subunits.

The catalysed reaction is L-glutamyl-tRNA(Gln) + L-glutamine + ATP + H2O = L-glutaminyl-tRNA(Gln) + L-glutamate + ADP + phosphate + H(+). It carries out the reaction L-aspartyl-tRNA(Asn) + L-glutamine + ATP + H2O = L-asparaginyl-tRNA(Asn) + L-glutamate + ADP + phosphate + 2 H(+). Allows the formation of correctly charged Asn-tRNA(Asn) or Gln-tRNA(Gln) through the transamidation of misacylated Asp-tRNA(Asn) or Glu-tRNA(Gln) in organisms which lack either or both of asparaginyl-tRNA or glutaminyl-tRNA synthetases. The reaction takes place in the presence of glutamine and ATP through an activated phospho-Asp-tRNA(Asn) or phospho-Glu-tRNA(Gln). This Variovorax paradoxus (strain S110) protein is Aspartyl/glutamyl-tRNA(Asn/Gln) amidotransferase subunit B.